A 348-amino-acid chain; its full sequence is Enkurin domain-containing protein 1 (348 aa).

3 disordered regions span residues Met-1 to Gly-65, Gly-84 to Lys-195, and Ala-262 to Pro-282. Ser-93 is subject to Phosphoserine. A compositionally biased stretch (basic and acidic residues) spans Lys-95 to Gly-127. Ser-138 carries the post-translational modification Phosphoserine. Positions Pro-139–Val-148 are enriched in basic and acidic residues. The 93-residue stretch at Glu-253 to Lys-345 folds into the Enkurin domain.

In terms of assembly, interacts with alpha-tubulin. Interacts (via central region) with CCP110 (via N-terminal region); competes with CEP97 for binding to CCP110.

It localises to the cytoplasm. It is found in the cytoskeleton. Its subcellular location is the microtubule organizing center. The protein resides in the centrosome. The protein localises to the centriole. It localises to the cilium basal body. It is found in the cell projection. Its subcellular location is the cilium. The protein resides in the spindle. The protein localises to the spindle pole. It localises to the cilium axoneme. Its function is as follows. Microtubule-binding protein which regulates microtubule organization and stability. Promotes the stability of astral microtubules and facilitates the proper orientation of the mitotic spindle. This allows the oriented division of basal keratinocytes and contributes to epidermal stratification. Required for the assembly of both primary and motile cilia. Destabilizes the interaction between CCP110 and CEP97 by competing with CEP97 for binding to CCP110 which promotes the removal of CCP110 and CEP97 from the mother centriole and allows the initiation of ciliogenesis. The sequence is that of Enkurin domain-containing protein 1 (ENKD1) from Bos taurus (Bovine).